A 426-amino-acid chain; its full sequence is Adenylosuccinate synthetase (426 aa).

GTP contacts are provided by residues 11–17 (GDEGKGK) and 39–41 (GHT). The active-site Proton acceptor is D12. Mg(2+)-binding residues include D12 and G39. IMP-binding positions include 12–15 (DEGK), 37–40 (NAGH), T130, R144, N226, T241, and R305. Catalysis depends on H40, which acts as the Proton donor. Residue 301–307 (VTTGRKR) coordinates substrate. GTP-binding positions include R307, 333 to 335 (KLD), and 415 to 417 (GTG).

This sequence belongs to the adenylosuccinate synthetase family. Homodimer. Mg(2+) serves as cofactor.

It localises to the cytoplasm. It catalyses the reaction IMP + L-aspartate + GTP = N(6)-(1,2-dicarboxyethyl)-AMP + GDP + phosphate + 2 H(+). The protein operates within purine metabolism; AMP biosynthesis via de novo pathway; AMP from IMP: step 1/2. Its function is as follows. Plays an important role in the de novo pathway and in the salvage pathway of purine nucleotide biosynthesis. Catalyzes the first committed step in the biosynthesis of AMP from IMP. This is Adenylosuccinate synthetase from Meyerozyma guilliermondii (strain ATCC 6260 / CBS 566 / DSM 6381 / JCM 1539 / NBRC 10279 / NRRL Y-324) (Yeast).